The chain runs to 904 residues: Protein translocase subunit SecA (904 aa).

ATP-binding positions include Q87, 105-109, and D507; that span reads GEGKT. Positions 865-887 are disordered; that stretch reads GEGAEAAGQQPADAGPKIGRNDP. The span at 868 to 880 shows a compositional bias: low complexity; the sequence is AEAAGQQPADAGP. Residues C888, C890, C899, and H900 each contribute to the Zn(2+) site.

Belongs to the SecA family. Monomer and homodimer. Part of the essential Sec protein translocation apparatus which comprises SecA, SecYEG and auxiliary proteins SecDF-YajC and YidC. Zn(2+) serves as cofactor.

It localises to the cell inner membrane. It is found in the cytoplasm. It carries out the reaction ATP + H2O + cellular proteinSide 1 = ADP + phosphate + cellular proteinSide 2.. In terms of biological role, part of the Sec protein translocase complex. Interacts with the SecYEG preprotein conducting channel. Has a central role in coupling the hydrolysis of ATP to the transfer of proteins into and across the cell membrane, serving both as a receptor for the preprotein-SecB complex and as an ATP-driven molecular motor driving the stepwise translocation of polypeptide chains across the membrane. The protein is Protein translocase subunit SecA of Dechloromonas aromatica (strain RCB).